Here is a 527-residue protein sequence, read N- to C-terminus: BTB/POZ domain-containing protein At4g01160 (527 aa).

One can recognise a BTB domain in the interval 111-180 (NNNTSVLSVQ…MYSNSLSVTA (70 aa)). One can recognise a BACK domain in the interval 233-327 (VKPLTNAARQ…HMTTDRLKKI (95 aa)).

The protein operates within protein modification; protein ubiquitination. In terms of biological role, may act as a substrate-specific adapter of an E3 ubiquitin-protein ligase complex (CUL3-RBX1-BTB) which mediates the ubiquitination and subsequent proteasomal degradation of target proteins. This Arabidopsis thaliana (Mouse-ear cress) protein is BTB/POZ domain-containing protein At4g01160.